A 250-amino-acid polypeptide reads, in one-letter code: Hydroxyethylthiazole kinase (250 aa).

Residue methionine 39 participates in substrate binding. Positions 114 and 159 each coordinate ATP. Position 186 (glycine 186) interacts with substrate.

The protein belongs to the Thz kinase family. Requires Mg(2+) as cofactor.

The enzyme catalyses 5-(2-hydroxyethyl)-4-methylthiazole + ATP = 4-methyl-5-(2-phosphooxyethyl)-thiazole + ADP + H(+). The protein operates within cofactor biosynthesis; thiamine diphosphate biosynthesis; 4-methyl-5-(2-phosphoethyl)-thiazole from 5-(2-hydroxyethyl)-4-methylthiazole: step 1/1. Functionally, catalyzes the phosphorylation of the hydroxyl group of 4-methyl-5-beta-hydroxyethylthiazole (THZ). This is Hydroxyethylthiazole kinase from Lactococcus lactis subsp. cremoris (strain MG1363).